The primary structure comprises 873 residues: DNA helicase/primase complex-associated protein (873 aa).

A disordered region spans residues 394–422; that stretch reads PPLPRDDGDGENNVVEVSSSTGGAHPPSD.

It belongs to the herpesviridae HEPA family. Associates with the primase and the helicase to form the helicase-primase complex. Interacts with the origin-binding protein. Interacts with the polymerase catalytic subunit.

The protein resides in the host nucleus. Component of the helicase/primase complex. Unwinds the DNA at the replication forks and generates single-stranded DNA for both leading and lagging strand synthesis. The primase synthesizes short RNA primers on the lagging strand that the polymerase presumably elongates using dNTPs. The primase-associated factor has no known catalytic activity in the complex and may serve to facilitate the formation of the replisome by directly interacting with the origin-binding protein and the polymerase. The sequence is that of DNA helicase/primase complex-associated protein (UL102) from Homo sapiens (Human).